Here is a 57-residue protein sequence, read N- to C-terminus: Potassium channel toxin alpha-KTx 8.5 (57 aa).

Residues 1-28 (MSRLYAIILIALVLNVIMTIMPDSKVEA) form the signal peptide. Disulfide bonds link Cys31/Cys47, Cys34/Cys52, and Cys38/Cys54.

This sequence belongs to the short scorpion toxin superfamily. Potassium channel inhibitor family. Alpha-KTx 08 subfamily. As to expression, expressed by the venom gland.

The protein localises to the secreted. Its function is as follows. Selectively inhibits voltage-gated potassium channels Kv1.2/KCNA2 (IC(50)=183 nM). This chain is Potassium channel toxin alpha-KTx 8.5, found in Odontobuthus doriae (Yellow Iranian scorpion).